The following is a 315-amino-acid chain: Ornithine carbamoyltransferase (315 aa).

Carbamoyl phosphate-binding positions include 53-56 (STRT), Gln80, Arg104, and 131-134 (HPCQ). L-ornithine is bound by residues Asn163, Asp227, and 231–232 (SM). Carbamoyl phosphate contacts are provided by residues 267–268 (CL) and Arg295.

Belongs to the aspartate/ornithine carbamoyltransferase superfamily. OTCase family.

It localises to the cytoplasm. It catalyses the reaction carbamoyl phosphate + L-ornithine = L-citrulline + phosphate + H(+). It functions in the pathway amino-acid biosynthesis; L-arginine biosynthesis; L-arginine from L-ornithine and carbamoyl phosphate: step 1/3. Its function is as follows. Reversibly catalyzes the transfer of the carbamoyl group from carbamoyl phosphate (CP) to the N(epsilon) atom of ornithine (ORN) to produce L-citrulline. This is Ornithine carbamoyltransferase from Rhodococcus jostii (strain RHA1).